A 74-amino-acid polypeptide reads, in one-letter code: Tetrahydromethanopterin S-methyltransferase subunit G (74 aa).

The chain crosses the membrane as a helical span at residues 47–67 (VGIAYGLAIGFIFVYVLGTVL).

The protein belongs to the MtrG family. As to quaternary structure, the complex is composed of 8 subunits; MtrA, MtrB, MtrC, MtrD, MtrE, MtrF, MtrG and MtrH.

The protein localises to the cell membrane. It catalyses the reaction 5-methyl-5,6,7,8-tetrahydromethanopterin + coenzyme M + 2 Na(+)(in) = 5,6,7,8-tetrahydromethanopterin + methyl-coenzyme M + 2 Na(+)(out). The protein operates within one-carbon metabolism; methanogenesis from CO(2); methyl-coenzyme M from 5,10-methylene-5,6,7,8-tetrahydromethanopterin: step 2/2. In terms of biological role, part of a complex that catalyzes the formation of methyl-coenzyme M and tetrahydromethanopterin from coenzyme M and methyl-tetrahydromethanopterin. This is an energy-conserving, sodium-ion translocating step. This is Tetrahydromethanopterin S-methyltransferase subunit G from Methanococcus maripaludis (strain DSM 14266 / JCM 13030 / NBRC 101832 / S2 / LL).